The primary structure comprises 319 residues: Lipoyl synthase (319 aa).

Positions 66, 71, 77, 92, 96, 99, and 305 each coordinate [4Fe-4S] cluster. The Radical SAM core domain occupies 78-294 (FNRGTATFMI…KKEALSIGFT (217 aa)).

The protein belongs to the radical SAM superfamily. Lipoyl synthase family. [4Fe-4S] cluster serves as cofactor.

Its subcellular location is the cytoplasm. It carries out the reaction [[Fe-S] cluster scaffold protein carrying a second [4Fe-4S](2+) cluster] + N(6)-octanoyl-L-lysyl-[protein] + 2 oxidized [2Fe-2S]-[ferredoxin] + 2 S-adenosyl-L-methionine + 4 H(+) = [[Fe-S] cluster scaffold protein] + N(6)-[(R)-dihydrolipoyl]-L-lysyl-[protein] + 4 Fe(3+) + 2 hydrogen sulfide + 2 5'-deoxyadenosine + 2 L-methionine + 2 reduced [2Fe-2S]-[ferredoxin]. It functions in the pathway protein modification; protein lipoylation via endogenous pathway; protein N(6)-(lipoyl)lysine from octanoyl-[acyl-carrier-protein]: step 2/2. Its function is as follows. Catalyzes the radical-mediated insertion of two sulfur atoms into the C-6 and C-8 positions of the octanoyl moiety bound to the lipoyl domains of lipoate-dependent enzymes, thereby converting the octanoylated domains into lipoylated derivatives. This chain is Lipoyl synthase, found in Buchnera aphidicola subsp. Schizaphis graminum (strain Sg).